We begin with the raw amino-acid sequence, 93 residues long: Protein ea8.5 (93 aa).

The protein is Protein ea8.5 (ea8.5) of Escherichia phage lambda (Bacteriophage lambda).